The chain runs to 229 residues: Uracil-DNA glycosylase (229 aa).

Catalysis depends on D65, which acts as the Proton acceptor.

Belongs to the uracil-DNA glycosylase (UDG) superfamily. UNG family.

Its subcellular location is the cytoplasm. It catalyses the reaction Hydrolyzes single-stranded DNA or mismatched double-stranded DNA and polynucleotides, releasing free uracil.. Excises uracil residues from the DNA which can arise as a result of misincorporation of dUMP residues by DNA polymerase or due to deamination of cytosine. The chain is Uracil-DNA glycosylase from Brevibacillus brevis (strain 47 / JCM 6285 / NBRC 100599).